Consider the following 329-residue polypeptide: Probable quinone oxidoreductase (329 aa).

Ser-191 is subject to Phosphoserine.

This sequence belongs to the zinc-containing alcohol dehydrogenase family. Quinone oxidoreductase subfamily.

It localises to the cytoplasm. The protein localises to the nucleus. The catalysed reaction is 2 a quinone + NADPH + H(+) = 2 a 1,4-benzosemiquinone + NADP(+). This Schizosaccharomyces pombe (strain 972 / ATCC 24843) (Fission yeast) protein is Probable quinone oxidoreductase (zta1).